Here is a 184-residue protein sequence, read N- to C-terminus: ATP synthase subunit b 1 (184 aa).

Residues Asn36–Val55 traverse the membrane as a helical segment.

This sequence belongs to the ATPase B chain family. As to quaternary structure, F-type ATPases have 2 components, F(1) - the catalytic core - and F(0) - the membrane proton channel. F(1) has five subunits: alpha(3), beta(3), gamma(1), delta(1), epsilon(1). F(0) has four main subunits: a(1), b(1), b'(1) and c(10-14). The alpha and beta chains form an alternating ring which encloses part of the gamma chain. F(1) is attached to F(0) by a central stalk formed by the gamma and epsilon chains, while a peripheral stalk is formed by the delta, b and b' chains.

The protein resides in the cellular thylakoid membrane. In terms of biological role, f(1)F(0) ATP synthase produces ATP from ADP in the presence of a proton or sodium gradient. F-type ATPases consist of two structural domains, F(1) containing the extramembraneous catalytic core and F(0) containing the membrane proton channel, linked together by a central stalk and a peripheral stalk. During catalysis, ATP synthesis in the catalytic domain of F(1) is coupled via a rotary mechanism of the central stalk subunits to proton translocation. Component of the F(0) channel, it forms part of the peripheral stalk, linking F(1) to F(0). The protein is ATP synthase subunit b 1 of Crocosphaera subtropica (strain ATCC 51142 / BH68) (Cyanothece sp. (strain ATCC 51142)).